Reading from the N-terminus, the 356-residue chain is Phosphate acyltransferase (356 aa).

This sequence belongs to the PlsX family. As to quaternary structure, homodimer. Probably interacts with PlsY.

The protein localises to the cytoplasm. The catalysed reaction is a fatty acyl-[ACP] + phosphate = an acyl phosphate + holo-[ACP]. The protein operates within lipid metabolism; phospholipid metabolism. Catalyzes the reversible formation of acyl-phosphate (acyl-PO(4)) from acyl-[acyl-carrier-protein] (acyl-ACP). This enzyme utilizes acyl-ACP as fatty acyl donor, but not acyl-CoA. This Shigella flexneri serotype 5b (strain 8401) protein is Phosphate acyltransferase.